The following is a 125-amino-acid chain: Small ribosomal subunit protein mS41 (125 aa).

The transit peptide at Met-1–Lys-23 directs the protein to the mitochondrion.

It belongs to the mitochondrion-specific ribosomal protein mS41 family.

It localises to the mitochondrion. Functionally, involved in telomere length regulation. This is Small ribosomal subunit protein mS41 (FYV4) from Kluyveromyces lactis (strain ATCC 8585 / CBS 2359 / DSM 70799 / NBRC 1267 / NRRL Y-1140 / WM37) (Yeast).